Consider the following 414-residue polypeptide: Dual-specificity RNA methyltransferase RlmN (414 aa).

Residues 1–13 (MTSAVGISVPNTD) show a composition bias toward polar residues. A disordered region spans residues 1–22 (MTSAVGISVPNTDAQSSQSASQ). The Proton acceptor role is filled by E124. A Radical SAM core domain is found at 134–377 (TGSRKTLCIS…CTIRQTRGDD (244 aa)). C141 and C382 are oxidised to a cystine. Residues C148, C152, and C155 each contribute to the [4Fe-4S] cluster site. Residues 204 to 205 (GE), S236, 258 to 260 (SLH), and N339 contribute to the S-adenosyl-L-methionine site. The S-methylcysteine intermediate role is filled by C382.

The protein belongs to the radical SAM superfamily. RlmN family. Requires [4Fe-4S] cluster as cofactor.

It is found in the cytoplasm. It catalyses the reaction adenosine(2503) in 23S rRNA + 2 reduced [2Fe-2S]-[ferredoxin] + 2 S-adenosyl-L-methionine = 2-methyladenosine(2503) in 23S rRNA + 5'-deoxyadenosine + L-methionine + 2 oxidized [2Fe-2S]-[ferredoxin] + S-adenosyl-L-homocysteine. It carries out the reaction adenosine(37) in tRNA + 2 reduced [2Fe-2S]-[ferredoxin] + 2 S-adenosyl-L-methionine = 2-methyladenosine(37) in tRNA + 5'-deoxyadenosine + L-methionine + 2 oxidized [2Fe-2S]-[ferredoxin] + S-adenosyl-L-homocysteine. Functionally, specifically methylates position 2 of adenine 2503 in 23S rRNA and position 2 of adenine 37 in tRNAs. m2A2503 modification seems to play a crucial role in the proofreading step occurring at the peptidyl transferase center and thus would serve to optimize ribosomal fidelity. The chain is Dual-specificity RNA methyltransferase RlmN from Acinetobacter baylyi (strain ATCC 33305 / BD413 / ADP1).